The following is a 589-amino-acid chain: ATP-dependent lipid A-core flippase (589 aa).

Transmembrane regions (helical) follow at residues 33–53 (VLAIVCMVLAAAGQAAFAWII), 70–90 (LWVPATLVGIFLFHGVTTFAS), 148–168 (VVVLVRDTFTVIFLLAYMTYL), 170–190 (GWLVMIVFGLGPLVAVVVTAA), 262–282 (LGAVIALAIILYLATMDVILE), and 283–303 (TISPGGMISFIAAMLLMLPPL). An ABC transmembrane type-1 domain is found at 33–315 (VLAIVCMVLA…VIGVNAEIQK (283 aa)). The 237-residue stretch at 347 to 583 (IEFDRVAFRY…NGHYASLHRV (237 aa)) folds into the ABC transporter domain. An ATP-binding site is contributed by 381 to 388 (GRSGSGKT).

Belongs to the ABC transporter superfamily. Lipid exporter (TC 3.A.1.106) family. As to quaternary structure, homodimer.

The protein localises to the cell inner membrane. It catalyses the reaction ATP + H2O + lipid A-core oligosaccharideSide 1 = ADP + phosphate + lipid A-core oligosaccharideSide 2.. Its function is as follows. Involved in lipopolysaccharide (LPS) biosynthesis. Translocates lipid A-core from the inner to the outer leaflet of the inner membrane. Transmembrane domains (TMD) form a pore in the inner membrane and the ATP-binding domain (NBD) is responsible for energy generation. The sequence is that of ATP-dependent lipid A-core flippase from Alkalilimnicola ehrlichii (strain ATCC BAA-1101 / DSM 17681 / MLHE-1).